The chain runs to 230 residues: Uracil-DNA glycosylase (230 aa).

D70 serves as the catalytic Proton acceptor.

This sequence belongs to the uracil-DNA glycosylase (UDG) superfamily. UNG family.

It localises to the cytoplasm. The enzyme catalyses Hydrolyzes single-stranded DNA or mismatched double-stranded DNA and polynucleotides, releasing free uracil.. Functionally, excises uracil residues from the DNA which can arise as a result of misincorporation of dUMP residues by DNA polymerase or due to deamination of cytosine. This chain is Uracil-DNA glycosylase, found in Pseudomonas syringae pv. tomato (strain ATCC BAA-871 / DC3000).